A 274-amino-acid chain; its full sequence is Dermonecrotic toxin SdSicTox-betaIIB1bv (274 aa).

Residue His-5 is part of the active site. Positions 25 and 27 each coordinate Mg(2+). His-41 (nucleophile) is an active-site residue. Intrachain disulfides connect Cys-45–Cys-51 and Cys-47–Cys-190. A Mg(2+)-binding site is contributed by Asp-85.

It belongs to the arthropod phospholipase D family. Class II subfamily. Requires Mg(2+) as cofactor. As to expression, expressed by the venom gland.

The protein localises to the secreted. The enzyme catalyses an N-(acyl)-sphingosylphosphocholine = an N-(acyl)-sphingosyl-1,3-cyclic phosphate + choline. It carries out the reaction an N-(acyl)-sphingosylphosphoethanolamine = an N-(acyl)-sphingosyl-1,3-cyclic phosphate + ethanolamine. The catalysed reaction is a 1-acyl-sn-glycero-3-phosphocholine = a 1-acyl-sn-glycero-2,3-cyclic phosphate + choline. It catalyses the reaction a 1-acyl-sn-glycero-3-phosphoethanolamine = a 1-acyl-sn-glycero-2,3-cyclic phosphate + ethanolamine. Functionally, dermonecrotic toxins cleave the phosphodiester linkage between the phosphate and headgroup of certain phospholipids (sphingolipid and lysolipid substrates), forming an alcohol (often choline) and a cyclic phosphate. This toxin acts on sphingomyelin (SM). It may also act on ceramide phosphoethanolamine (CPE), lysophosphatidylcholine (LPC) and lysophosphatidylethanolamine (LPE), but not on lysophosphatidylserine (LPS), and lysophosphatidylglycerol (LPG). It acts by transphosphatidylation, releasing exclusively cyclic phosphate products as second products. Induces dermonecrosis, hemolysis, increased vascular permeability, edema, inflammatory response, and platelet aggregation. This chain is Dermonecrotic toxin SdSicTox-betaIIB1bv, found in Sicarius cf. damarensis (strain GJB-2008) (Six-eyed sand spider).